The chain runs to 80 residues: Serine palmitoyltransferase small subunit A (80 aa).

Topologically, residues 1–21 (MKVSCEDINGPRSSLSRAWNH) are cytoplasmic. Residues 22–38 (MSWLYYQYLLVTALYML) traverse the membrane as a helical segment. At 39–43 (EPWER) the chain is on the lumenal side. The helical transmembrane segment at 44 to 66 (TIFNSMLVSIVGMALYTGYIFMP) threads the bilayer. Residues 67–80 (QHILAILHYFEIVQ) are Cytoplasmic-facing.

This sequence belongs to the SPTSS family. SPTSSA subfamily. In terms of assembly, component of the serine palmitoyltransferase (SPT) complex, which is composed of SPTLC1, SPTLC2 or SPTLC3 and SPTSSA or SPTSSB. The heterodimer consisting of SPTLC1 and SPTLC2/SPTLC3 forms the catalytic core of the enzyme, while SPTSSA or SPTSSB subunits determine substrate specificity. SPT also interacts with ORMDL proteins, especially ORMDL3, which negatively regulate SPT activity in the presence of ceramides.

It localises to the endoplasmic reticulum membrane. The protein operates within lipid metabolism; sphingolipid metabolism. Its function is as follows. Component of the serine palmitoyltransferase multisubunit enzyme (SPT) that catalyzes the initial and rate-limiting step in sphingolipid biosynthesis by condensing L-serine and activated acyl-CoA (most commonly palmitoyl-CoA) to form long-chain bases. The SPT complex is composed of SPTLC1, SPTLC2 or SPTLC3 and SPTSSA or SPTSSB. Within this complex, the heterodimer consisting of SPTLC1 and SPTLC2/SPTLC3 forms the catalytic core. Within the SPT complex, SPTSSA stimulates the catalytic activity and plays a role in substrate specificity, which depends upon the overall complex composition. The SPTLC1-SPTLC2-SPTSSA complex shows a strong preference for C16-CoA substrate, while the SPTLC1-SPTLC3-SPTSSA isozyme uses both C14-CoA and C16-CoA as substrates, with a slight preference for C14-CoA. Independently of its action as a SPT component, may be involved in MBOAT7 localization to mitochondria-associated membranes, a membrane bridge between the endoplasmic reticulum and mitochondria, may hence affect MBOAT7-catalyzed incorporation of arachidonic acid into phosphatidylinositol. This is Serine palmitoyltransferase small subunit A (sptssa) from Xenopus tropicalis (Western clawed frog).